Reading from the N-terminus, the 312-residue chain is Ribosomal protein L11 methyltransferase (312 aa).

4 residues coordinate S-adenosyl-L-methionine: T162, G183, D205, and N248.

The protein belongs to the methyltransferase superfamily. PrmA family.

It localises to the cytoplasm. The enzyme catalyses L-lysyl-[protein] + 3 S-adenosyl-L-methionine = N(6),N(6),N(6)-trimethyl-L-lysyl-[protein] + 3 S-adenosyl-L-homocysteine + 3 H(+). In terms of biological role, methylates ribosomal protein L11. The protein is Ribosomal protein L11 methyltransferase of Exiguobacterium sp. (strain ATCC BAA-1283 / AT1b).